The following is a 123-amino-acid chain: uncharacterized protein (123 aa).

This is an uncharacterized protein from Acanthamoeba polyphaga mimivirus (APMV).